The sequence spans 536 residues: Chromosomal replication initiator protein DnaA (536 aa).

The domain I, interacts with DnaA modulators stretch occupies residues 1 to 72 (MNDFWQHCSA…DLARDFWNAP (72 aa)). Residues 72 to 199 (PIEVQFVLDP…EAADSMYERS (128 aa)) are domain II. Residues 97–121 (RAPLPAANPAPVTAGPAPSGAADAN) form a disordered region. Low complexity predominate over residues 105–121 (PAPVTAGPAPSGAADAN). The segment at 200-416 (KLNPVLTFDN…GALRKILAYS (217 aa)) is domain III, AAA+ region. ATP contacts are provided by G244, G246, K247, and T248. Positions 417–536 (KFHGREITIE…LHVLEQTLKG (120 aa)) are domain IV, binds dsDNA.

Belongs to the DnaA family. Oligomerizes as a right-handed, spiral filament on DNA at oriC.

Its subcellular location is the cytoplasm. Functionally, plays an essential role in the initiation and regulation of chromosomal replication. ATP-DnaA binds to the origin of replication (oriC) to initiate formation of the DNA replication initiation complex once per cell cycle. Binds the DnaA box (a 9 base pair repeat at the origin) and separates the double-stranded (ds)DNA. Forms a right-handed helical filament on oriC DNA; dsDNA binds to the exterior of the filament while single-stranded (ss)DNA is stabiized in the filament's interior. The ATP-DnaA-oriC complex binds and stabilizes one strand of the AT-rich DNA unwinding element (DUE), permitting loading of DNA polymerase. After initiation quickly degrades to an ADP-DnaA complex that is not apt for DNA replication. Binds acidic phospholipids. This Burkholderia thailandensis (strain ATCC 700388 / DSM 13276 / CCUG 48851 / CIP 106301 / E264) protein is Chromosomal replication initiator protein DnaA.